We begin with the raw amino-acid sequence, 170 residues long: Crossover junction endodeoxyribonuclease RuvC (170 aa).

Residues aspartate 11, glutamate 71, and aspartate 143 contribute to the active site. Positions 11, 71, and 143 each coordinate Mg(2+).

The protein belongs to the RuvC family. In terms of assembly, homodimer which binds Holliday junction (HJ) DNA. The HJ becomes 2-fold symmetrical on binding to RuvC with unstacked arms; it has a different conformation from HJ DNA in complex with RuvA. In the full resolvosome a probable DNA-RuvA(4)-RuvB(12)-RuvC(2) complex forms which resolves the HJ. The cofactor is Mg(2+).

The protein resides in the cytoplasm. The enzyme catalyses Endonucleolytic cleavage at a junction such as a reciprocal single-stranded crossover between two homologous DNA duplexes (Holliday junction).. The RuvA-RuvB-RuvC complex processes Holliday junction (HJ) DNA during genetic recombination and DNA repair. Endonuclease that resolves HJ intermediates. Cleaves cruciform DNA by making single-stranded nicks across the HJ at symmetrical positions within the homologous arms, yielding a 5'-phosphate and a 3'-hydroxyl group; requires a central core of homology in the junction. The consensus cleavage sequence is 5'-(A/T)TT(C/G)-3'. Cleavage occurs on the 3'-side of the TT dinucleotide at the point of strand exchange. HJ branch migration catalyzed by RuvA-RuvB allows RuvC to scan DNA until it finds its consensus sequence, where it cleaves and resolves the cruciform DNA. The sequence is that of Crossover junction endodeoxyribonuclease RuvC from Agrobacterium fabrum (strain C58 / ATCC 33970) (Agrobacterium tumefaciens (strain C58)).